The sequence spans 545 residues: Chaperonin GroEL (545 aa).

Residues 30–33, lysine 51, 87–91, glycine 415, 479–481, and aspartate 495 each bind ATP; these read TLGP, DGTTT, and NAA. Residues 526–545 form a disordered region; sequence KEDKPDLGGAGGMGGMGGMM. A compositionally biased stretch (gly residues) spans 533–545; it reads GGAGGMGGMGGMM.

This sequence belongs to the chaperonin (HSP60) family. As to quaternary structure, forms a cylinder of 14 subunits composed of two heptameric rings stacked back-to-back. Interacts with the co-chaperonin GroES.

Its subcellular location is the cytoplasm. The catalysed reaction is ATP + H2O + a folded polypeptide = ADP + phosphate + an unfolded polypeptide.. Its function is as follows. Together with its co-chaperonin GroES, plays an essential role in assisting protein folding. The GroEL-GroES system forms a nano-cage that allows encapsulation of the non-native substrate proteins and provides a physical environment optimized to promote and accelerate protein folding. In Sodalis glossinidius, this protein is Chaperonin GroEL.